The primary structure comprises 354 residues: Biotin synthase (354 aa).

One can recognise a Radical SAM core domain in the interval 41–265 (NEVQISRLLS…IMPHSRVRLS (225 aa)). [4Fe-4S] cluster is bound by residues Cys56, Cys60, and Cys63. Cys100, Cys131, Cys191, and Arg263 together coordinate [2Fe-2S] cluster.

The protein belongs to the radical SAM superfamily. Biotin synthase family. As to quaternary structure, homodimer. Requires [4Fe-4S] cluster as cofactor. [2Fe-2S] cluster serves as cofactor.

The catalysed reaction is (4R,5S)-dethiobiotin + (sulfur carrier)-SH + 2 reduced [2Fe-2S]-[ferredoxin] + 2 S-adenosyl-L-methionine = (sulfur carrier)-H + biotin + 2 5'-deoxyadenosine + 2 L-methionine + 2 oxidized [2Fe-2S]-[ferredoxin]. It functions in the pathway cofactor biosynthesis; biotin biosynthesis; biotin from 7,8-diaminononanoate: step 2/2. Functionally, catalyzes the conversion of dethiobiotin (DTB) to biotin by the insertion of a sulfur atom into dethiobiotin via a radical-based mechanism. This chain is Biotin synthase, found in Shewanella sediminis (strain HAW-EB3).